A 995-amino-acid chain; its full sequence is DExH-box ATP-dependent RNA helicase DExH10 (995 aa).

Residues 1 to 42 form a disordered region; it reads MSAQMEEPETLGKRKESESSKLRSDETPTPEPRTKRRSLKRA. At Ser-2 the chain carries N-acetylserine. Positions 10 to 26 are enriched in basic and acidic residues; that stretch reads TLGKRKESESSKLRSDE. Residues 90-246 enclose the Helicase ATP-binding domain; sequence VACLERKESI…WICYLHKQPC (157 aa). 103 to 110 contributes to the ATP binding site; that stretch reads AHTSAGKT. Positions 194 to 197 match the DEIH box motif; that stretch reads DEIH. The disordered stretch occupies residues 290–318; that stretch reads DTFPKPKSNDGKKSANGKSGGRGAKGGGG. Residues 307–318 are compositionally biased toward gly residues; sequence KSGGRGAKGGGG. A Helicase C-terminal domain is found at 323–524; it reads DVYKIVKMIM…LSYYTILNLL (202 aa).

This sequence belongs to the DExH box helicase family. SKI2 subfamily. As to expression, expressed in inflorescences, leaves, stems, and roots.

The protein localises to the nucleus. Its subcellular location is the nucleoplasm. It catalyses the reaction ATP + H2O = ADP + phosphate + H(+). ATP-dependent RNA helicase that associates with the RNA exosome complex, with the cap binding complex (CBC) and with the NEXT-like complex. Involved in the degradation of a large number of non-coding nuclear exosome substrates such as snoRNA and miRNA precursors, incompletely spliced mRNAs, and spurious transcripts produced from pseudogenes and intergenic regions. Involved in the maintenance of homeotic B and C gene expression in the reproductive whorls. Regulates floral organ spacing and identity, probably through the regulation of protein synthesis or mRNA degradation. In Arabidopsis thaliana (Mouse-ear cress), this protein is DExH-box ATP-dependent RNA helicase DExH10.